Here is a 579-residue protein sequence, read N- to C-terminus: SLAIN motif-containing protein 1 (579 aa).

Disordered regions lie at residues 1 to 21 (MMAEQVKCASPVAASGAGPGP), 60 to 95 (LLLQPPPPSAPPPAGACSPLATHRAPASTTSPGPGA), 135 to 162 (GGGGSPEPGTAGTPPGEAATPPLPPPTL), 233 to 258 (YTSRGSPLSPQSSIDSELSTSELEDD), 289 to 313 (STSASVSRNSSSVSLSSGKKGTCSD), and 347 to 454 (IPHS…PGQI). Residues 9 to 21 (ASPVAASGAGPGP) show a composition bias toward low complexity. Positions 21 to 56 (PVVNAELEVKKLQELVRKLEKQNEQLRSRAASAAAA) form a coiled coil. Pro residues predominate over residues 63-73 (QPPPPSAPPPA). The span at 141–154 (EPGTAGTPPGEAAT) shows a compositional bias: low complexity. Residues 233–243 (YTSRGSPLSPQ) are compositionally biased toward polar residues. Serine 241 is modified (phosphoserine). Composition is skewed to low complexity over residues 244-253 (SSIDSELSTS) and 289-305 (STSASVSRNSSSVSLSS). Over residues 362–373 (SPSTQYFPSNNF) the composition is skewed to polar residues. A compositionally biased stretch (low complexity) spans 374–390 (QQPQYYPPQAQTADQQP). Residues 412-432 (AAASSNLSSPVTVRSSQSFDS) show a composition bias toward polar residues. Arginine 469 bears the Asymmetric dimethylarginine mark. The disordered stretch occupies residues 479-516 (SPTVQGSSSSGSSGSSGGSGSGMPLSNGTQLYSTTGIP). Positions 502 to 516 (PLSNGTQLYSTTGIP) are enriched in polar residues. Position 554 is an asymmetric dimethylarginine (arginine 554).

It belongs to the SLAIN motif-containing family. Interacts with MAPRE1, MAPRE2, MAPRE3 and CKAP5. Interacts with ZDHHC17 (via ANK repeats). In terms of tissue distribution, expressed in embryonic stem cells. Expressed in adult bone marrow, brain, kidney, lung, testis and thymus. Expressed in colon. Isoform 1 is highly expressed in brain. Isoform 2 is more widely expressed in bone marrow, brain, colon, kidney, lung and thymus.

It is found in the cytoplasm. The protein resides in the cytoskeleton. Microtubule plus-end tracking protein that might be involved in the regulation of cytoplasmic microtubule dynamics, microtubule organization and microtubule elongation. The polypeptide is SLAIN motif-containing protein 1 (Slain1) (Mus musculus (Mouse)).